Here is a 302-residue protein sequence, read N- to C-terminus: tRNA-cytidine(32) 2-sulfurtransferase (302 aa).

A PP-loop motif motif is present at residues 44–49 (SGGKDS). [4Fe-4S] cluster-binding residues include C119, C122, and C210.

The protein belongs to the TtcA family. Homodimer. It depends on Mg(2+) as a cofactor. [4Fe-4S] cluster serves as cofactor.

It localises to the cytoplasm. The enzyme catalyses cytidine(32) in tRNA + S-sulfanyl-L-cysteinyl-[cysteine desulfurase] + AH2 + ATP = 2-thiocytidine(32) in tRNA + L-cysteinyl-[cysteine desulfurase] + A + AMP + diphosphate + H(+). It functions in the pathway tRNA modification. Catalyzes the ATP-dependent 2-thiolation of cytidine in position 32 of tRNA, to form 2-thiocytidine (s(2)C32). The sulfur atoms are provided by the cysteine/cysteine desulfurase (IscS) system. The chain is tRNA-cytidine(32) 2-sulfurtransferase from Tolumonas auensis (strain DSM 9187 / NBRC 110442 / TA 4).